Consider the following 305-residue polypeptide: Tyrosine recombinase XerC (305 aa).

The region spanning 2 to 88 (NQLELYIDTF…TLRSFYRFLE (87 aa)) is the Core-binding (CB) domain. In terms of domain architecture, Tyr recombinase spans 109-294 (PVPGFLYQEE…TKDHLREAYM (186 aa)). Active-site residues include arginine 149, lysine 173, histidine 246, arginine 249, and histidine 272. The active-site O-(3'-phospho-DNA)-tyrosine intermediate is the tyrosine 281.

Belongs to the 'phage' integrase family. XerC subfamily. Forms a cyclic heterotetrameric complex composed of two molecules of XerC and two molecules of XerD.

The protein localises to the cytoplasm. Site-specific tyrosine recombinase, which acts by catalyzing the cutting and rejoining of the recombining DNA molecules. The XerC-XerD complex is essential to convert dimers of the bacterial chromosome into monomers to permit their segregation at cell division. It also contributes to the segregational stability of plasmids. This is Tyrosine recombinase XerC from Oceanobacillus iheyensis (strain DSM 14371 / CIP 107618 / JCM 11309 / KCTC 3954 / HTE831).